Here is a 90-residue protein sequence, read N- to C-terminus: Sec-independent protein translocase protein TatA (90 aa).

A helical transmembrane segment spans residues 1 to 21 (MGSMSIWHWVIVAVIVMLLFG). The interval 44 to 90 (AEDETPPAVQAAPPPAEPVRTIPHATETSPGTAIPASHLPGGERKPV) is disordered.

It belongs to the TatA/E family. In terms of assembly, the Tat system comprises two distinct complexes: a TatABC complex, containing multiple copies of TatA, TatB and TatC subunits, and a separate TatA complex, containing only TatA subunits. Substrates initially bind to the TatABC complex, which probably triggers association of the separate TatA complex to form the active translocon.

It is found in the cell inner membrane. Its function is as follows. Part of the twin-arginine translocation (Tat) system that transports large folded proteins containing a characteristic twin-arginine motif in their signal peptide across membranes. TatA could form the protein-conducting channel of the Tat system. The sequence is that of Sec-independent protein translocase protein TatA from Methylobacterium radiotolerans (strain ATCC 27329 / DSM 1819 / JCM 2831 / NBRC 15690 / NCIMB 10815 / 0-1).